The chain runs to 112 residues: Large ribosomal subunit protein uL22 (112 aa).

The protein belongs to the universal ribosomal protein uL22 family. In terms of assembly, part of the 50S ribosomal subunit.

In terms of biological role, this protein binds specifically to 23S rRNA; its binding is stimulated by other ribosomal proteins, e.g. L4, L17, and L20. It is important during the early stages of 50S assembly. It makes multiple contacts with different domains of the 23S rRNA in the assembled 50S subunit and ribosome. Functionally, the globular domain of the protein is located near the polypeptide exit tunnel on the outside of the subunit, while an extended beta-hairpin is found that lines the wall of the exit tunnel in the center of the 70S ribosome. The protein is Large ribosomal subunit protein uL22 of Sorangium cellulosum (strain So ce56) (Polyangium cellulosum (strain So ce56)).